We begin with the raw amino-acid sequence, 492 residues long: Ribose import ATP-binding protein RbsA (492 aa).

ABC transporter domains lie at 3–239 (IEMK…VGRS) and 249–492 (AEIR…TGGQ). An ATP-binding site is contributed by 35–42 (GENGAGKS).

It belongs to the ABC transporter superfamily. Ribose importer (TC 3.A.1.2.1) family. In terms of assembly, the complex is composed of an ATP-binding protein (RbsA), two transmembrane proteins (RbsC) and a solute-binding protein (RbsB).

The protein resides in the cell membrane. It carries out the reaction D-ribose(out) + ATP + H2O = D-ribose(in) + ADP + phosphate + H(+). Part of the ABC transporter complex RbsABC involved in ribose import. Responsible for energy coupling to the transport system. This is Ribose import ATP-binding protein RbsA from Lactococcus lactis subsp. lactis (strain IL1403) (Streptococcus lactis).